Reading from the N-terminus, the 357-residue chain is G-protein coupled receptor 183 (357 aa).

Over 1-32 (MANNFTTPLAASHGNNCDLYAHHSTARILMPL) the chain is Extracellular. N-linked (GlcNAc...) asparagine glycosylation is present at Asn-4. Residues 33-53 (HYSLVFIIGLVGNLLALVVIV) form a helical membrane-spanning segment. Residues 54–68 (QNRKKINSTTLYSMN) are Cytoplasmic-facing. The chain crosses the membrane as a helical span at residues 69 to 89 (LVISDILFTTALPTRIVYYAL). Arg-83 serves as a coordination point for 7alpha,25-dihydroxycholesterol. Topologically, residues 90 to 101 (GFDWRIGDALCR) are extracellular. A disulfide bridge links Cys-100 with Cys-177. Residues 102-122 (ITALLFYINTYAGVNFMTCLS) form a helical membrane-spanning segment. Tyr-108 and Tyr-112 together coordinate 7alpha,25-dihydroxycholesterol. The tract at residues 122 to 130 (SIDRFFAVV) is interaction with G proteins. Residues 123–143 (IDRFFAVVHPLRYNKIKRIEY) are Cytoplasmic-facing. The chain crosses the membrane as a helical span at residues 144–164 (AKGICVFVWILVFAQTLPLLL). At 165 to 190 (KPMSKQEADKTTCMEYPNFEGTASLP) the chain is on the extracellular side. The helical transmembrane segment at 191–211 (WILLGACLLGYVLPLAIILLC) threads the bilayer. The Cytoplasmic segment spans residues 212–240 (YSQICCKLFRTAKQNPLTEKSGVNKKALN). Residues 241–261 (TIILIIGVFVLCFTPYHVAIM) traverse the membrane as a helical segment. Tyr-256 provides a ligand contact to 7alpha,25-dihydroxycholesterol. Residues 262-287 (QHMVKTLYAPGALGCGVRHSFQISLH) lie on the Extracellular side of the membrane. The helical transmembrane segment at 288–308 (FTVCLMNFNCCMDPFIYFFAC) threads the bilayer. Residues 309–357 (KGYKRKVMKMLKRQVSVSISSAVRSAPEENSREMTESQMMIHSKASNGR) lie on the Cytoplasmic side of the membrane. Phosphoserine is present on residues Ser-324 and Ser-345. Residues 336–357 (EENSREMTESQMMIHSKASNGR) are disordered. Residues 344–357 (ESQMMIHSKASNGR) are compositionally biased toward polar residues.

The protein belongs to the G-protein coupled receptor 1 family. Homodimer and heterodimer. Heterodimerizes with CXCR5; leading to modulate the interaction between of CXCL13 and CXCR5.

It localises to the cell membrane. Functionally, G-protein coupled receptor expressed in lymphocytes that acts as a chemotactic receptor for B-cells, T-cells, splenic dendritic cells, monocytes/macrophages and astrocytes. Receptor for oxysterol 7-alpha,25-dihydroxycholesterol (7-alpha,25-OHC) and other related oxysterols. Mediates cell positioning and movement of a number of cells by binding the 7-alpha,25-OHC ligand that forms a chemotactic gradient. Binding of 7-alpha,25-OHC mediates the correct localization of B-cells during humoral immune responses. Guides B-cell movement along the B-cell zone-T-cell zone boundary and later to interfollicular and outer follicular regions. Its specific expression during B-cell maturation helps position B-cells appropriately for mounting T-dependent antibody responses. Collaborates with CXCR5 to mediate B-cell migration; probably by forming a heterodimer with CXCR5 that affects the interaction between of CXCL13 and CXCR5. Also acts as a chemotactic receptor for some T-cells upon binding to 7-alpha,25-OHC ligand. Promotes follicular helper T (Tfh) cells differentiation by positioning activated T-cells at the follicle-T-zone interface, promoting contact of newly activated CD4 T-cells with activated dendritic cells and exposing them to Tfh-cell-promoting inducible costimulator (ICOS) ligand. Expression in splenic dendritic cells is required for their homeostasis, localization and ability to induce B- and T-cell responses: GPR183 acts as a chemotactic receptor in dendritic cells that mediates the accumulation of CD4(+) dendritic cells in bridging channels. Regulates migration of astrocytes and is involved in communication between astrocytes and macrophages. Promotes osteoclast precursor migration to bone surfaces. Signals constitutively through G(i)-alpha, but not G(s)-alpha or G(q)-alpha. Signals constitutively also via MAPK1/3 (ERK1/2). This is G-protein coupled receptor 183 (Gpr183) from Rattus norvegicus (Rat).